Consider the following 265-residue polypeptide: Mlc titration factor A (265 aa).

His-111, His-148, His-152, and Glu-211 together coordinate Zn(2+).

This sequence belongs to the MtfA family. As to quaternary structure, interacts with Mlc. Zn(2+) is required as a cofactor.

The protein localises to the cytoplasm. Involved in the modulation of the activity of the glucose-phosphotransferase system (glucose-PTS). Interacts with the transcriptional repressor Mlc, preventing its interaction with DNA and leading to the modulation of expression of genes regulated by Mlc, including ptsG, which encodes the PTS system glucose-specific EIICB component. In terms of biological role, shows zinc-dependent metallopeptidase activity. This Klebsiella pneumoniae (strain 342) protein is Mlc titration factor A.